The primary structure comprises 206 residues: 3-demethoxyubiquinol 3-hydroxylase (206 aa).

Fe cation-binding residues include Glu-55, Glu-85, His-88, Glu-137, Glu-169, and His-172.

It belongs to the COQ7 family. It depends on Fe cation as a cofactor.

It is found in the cell membrane. The catalysed reaction is a 5-methoxy-2-methyl-3-(all-trans-polyprenyl)benzene-1,4-diol + AH2 + O2 = a 3-demethylubiquinol + A + H2O. It participates in cofactor biosynthesis; ubiquinone biosynthesis. In terms of biological role, catalyzes the hydroxylation of 2-nonaprenyl-3-methyl-6-methoxy-1,4-benzoquinol during ubiquinone biosynthesis. In Chromobacterium violaceum (strain ATCC 12472 / DSM 30191 / JCM 1249 / CCUG 213 / NBRC 12614 / NCIMB 9131 / NCTC 9757 / MK), this protein is 3-demethoxyubiquinol 3-hydroxylase.